We begin with the raw amino-acid sequence, 466 residues long: Histidinol dehydrogenase, chloroplastic (466 aa).

The transit peptide at 1–30 (MSLNLSRLSLLSSPRISISTHAPRKGYVCC) directs the protein to the chloroplast. Residues Tyr155, Gln217, and Asn240 each contribute to the NAD(+) site. Substrate-binding residues include Ser266, Gln288, and His291. Gln288 and His291 together coordinate Zn(2+). Active-site proton acceptor residues include Glu356 and His357. The substrate site is built by His357, Asp390, Glu444, and His449. Asp390 serves as a coordination point for Zn(2+). His449 lines the Zn(2+) pocket.

The protein belongs to the histidinol dehydrogenase family. It depends on Zn(2+) as a cofactor.

Its subcellular location is the plastid. The protein resides in the chloroplast. It catalyses the reaction L-histidinol + 2 NAD(+) + H2O = L-histidine + 2 NADH + 3 H(+). It functions in the pathway amino-acid biosynthesis; L-histidine biosynthesis; L-histidine from 5-phospho-alpha-D-ribose 1-diphosphate: step 9/9. Its function is as follows. Catalyzes the sequential NAD-dependent oxidations of L-histidinol to L-histidinaldehyde and then to L-histidine. This is Histidinol dehydrogenase, chloroplastic (HISN8) from Arabidopsis thaliana (Mouse-ear cress).